The primary structure comprises 217 residues: Large ribosomal subunit protein uL4 (217 aa).

Residues 42–100 (RAAARQGTHSTKTRGDVSGGGRKPYRQKGTGRARQGSTRAPQFTGGGVVHGPKPRDYSQ) are disordered.

Belongs to the universal ribosomal protein uL4 family. As to quaternary structure, part of the 50S ribosomal subunit.

Its function is as follows. One of the primary rRNA binding proteins, this protein initially binds near the 5'-end of the 23S rRNA. It is important during the early stages of 50S assembly. It makes multiple contacts with different domains of the 23S rRNA in the assembled 50S subunit and ribosome. Forms part of the polypeptide exit tunnel. This chain is Large ribosomal subunit protein uL4, found in Mycobacterium avium (strain 104).